Consider the following 251-residue polypeptide: UPF0246 protein TM1040_2658 (251 aa).

Belongs to the UPF0246 family.

The sequence is that of UPF0246 protein TM1040_2658 from Ruegeria sp. (strain TM1040) (Silicibacter sp.).